The following is a 170-amino-acid chain: Inosine/xanthosine triphosphatase (170 aa).

This sequence belongs to the YjjX NTPase family. In terms of assembly, homodimer. It depends on Mg(2+) as a cofactor. Mn(2+) serves as cofactor.

It carries out the reaction XTP + H2O = XDP + phosphate + H(+). The enzyme catalyses ITP + H2O = IDP + phosphate + H(+). Its function is as follows. Phosphatase that hydrolyzes non-canonical purine nucleotides such as XTP and ITP to their respective diphosphate derivatives. Probably excludes non-canonical purines from DNA/RNA precursor pool, thus preventing their incorporation into DNA/RNA and avoiding chromosomal lesions. This is Inosine/xanthosine triphosphatase from Aliivibrio fischeri (strain ATCC 700601 / ES114) (Vibrio fischeri).